A 100-amino-acid chain; its full sequence is Apolipoprotein C-II (100 aa).

The first 25 residues, 1–25 (MDARSLLLLWLLLPLLLLLGCEVQG), serve as a signal peptide directing secretion. The tract at residues 65–73 (AVDETIRDI) is lipid binding. Positions 77-100 (GSAAISTYTGILTDQILTMLQGKQ) are lipoprotein lipase cofactor.

The protein belongs to the apolipoprotein C2 family. Post-translationally, proapolipoprotein C-II is synthesized as a sialic acid containing glycoprotein which is subsequently desialylated prior to its proteolytic processing. In terms of processing, proapolipoprotein C-II, the major form found in plasma undergoes proteolytic cleavage of its N-terminal hexapeptide to generate apolipoprotein C-II, which occurs as the minor form in plasma. Liver.

The protein localises to the secreted. Its function is as follows. Component of chylomicrons, very low-density lipoproteins (VLDL), low-density lipoproteins (LDL), and high-density lipoproteins (HDL) in plasma. Plays an important role in lipoprotein metabolism as an activator of lipoprotein lipase. Both proapolipoprotein C-II and apolipoprotein C-II can activate lipoprotein lipase. This Cavia porcellus (Guinea pig) protein is Apolipoprotein C-II (APOC2).